Here is a 126-residue protein sequence, read N- to C-terminus: Holo-[acyl-carrier-protein] synthase (126 aa).

Mg(2+) contacts are provided by Asp9 and Glu58.

It belongs to the P-Pant transferase superfamily. AcpS family. Mg(2+) is required as a cofactor.

It localises to the cytoplasm. It carries out the reaction apo-[ACP] + CoA = holo-[ACP] + adenosine 3',5'-bisphosphate + H(+). Functionally, transfers the 4'-phosphopantetheine moiety from coenzyme A to a Ser of acyl-carrier-protein. The chain is Holo-[acyl-carrier-protein] synthase from Vibrio campbellii (strain ATCC BAA-1116).